Here is a 79-residue protein sequence, read N- to C-terminus: Serine protease inhibitor Kazal-type 1 (79 aa).

A signal peptide spans 1-23; the sequence is MKVASIFLLTALVLMSLSGNSGA. Residues 26 to 79 enclose the Kazal-like domain; the sequence is LGREAKCTNEVNGCPRIYNPVCGTDGVTYSNECLLCMENKERQTPVLIQKSGPC. Intrachain disulfides connect C32-C61, C39-C58, and C47-C79.

It localises to the secreted. Serine protease inhibitor which exhibits anti-trypsin activity. In the pancreas, protects against trypsin-catalyzed premature activation of zymogens. In terms of biological role, in the male reproductive tract, binds to sperm heads where it modulates sperm capacitance by inhibiting calcium uptake and nitrogen oxide (NO) production. The sequence is that of Serine protease inhibitor Kazal-type 1 (SPINK1) from Bos taurus (Bovine).